Consider the following 159-residue polypeptide: 2-C-methyl-D-erythritol 2,4-cyclodiphosphate synthase (159 aa).

2 residues coordinate a divalent metal cation: Asp10 and His12. 4-CDP-2-C-methyl-D-erythritol 2-phosphate-binding positions include 10 to 12 (DVH) and 36 to 37 (HS). His44 lines the a divalent metal cation pocket. Residues 58 to 60 (DIG), 134 to 137 (TTTE), Phe141, and Arg144 contribute to the 4-CDP-2-C-methyl-D-erythritol 2-phosphate site.

It belongs to the IspF family. In terms of assembly, homotrimer. It depends on a divalent metal cation as a cofactor.

The catalysed reaction is 4-CDP-2-C-methyl-D-erythritol 2-phosphate = 2-C-methyl-D-erythritol 2,4-cyclic diphosphate + CMP. It functions in the pathway isoprenoid biosynthesis; isopentenyl diphosphate biosynthesis via DXP pathway; isopentenyl diphosphate from 1-deoxy-D-xylulose 5-phosphate: step 4/6. In terms of biological role, involved in the biosynthesis of isopentenyl diphosphate (IPP) and dimethylallyl diphosphate (DMAPP), two major building blocks of isoprenoid compounds. Catalyzes the conversion of 4-diphosphocytidyl-2-C-methyl-D-erythritol 2-phosphate (CDP-ME2P) to 2-C-methyl-D-erythritol 2,4-cyclodiphosphate (ME-CPP) with a corresponding release of cytidine 5-monophosphate (CMP). In Bacteroides thetaiotaomicron (strain ATCC 29148 / DSM 2079 / JCM 5827 / CCUG 10774 / NCTC 10582 / VPI-5482 / E50), this protein is 2-C-methyl-D-erythritol 2,4-cyclodiphosphate synthase.